Consider the following 125-residue polypeptide: MNGLALAYLGDAYYELEIRKYLITQGIRNVGKLHTEKVRLASNEAQASIMNYFLSLEILSEEEIDAYKKGRNKSHNSRKQMDMVTYQQATGFESLIGYLSIIDEQRAKDLINLGITFIKQGGYNG.

D11 is an active-site residue.

It belongs to the MrnC RNase family. Homodimer. Requires Mg(2+) as cofactor.

Its subcellular location is the cytoplasm. In terms of biological role, involved in correct processing of both the 5' and 3' ends of 23S rRNA precursor. Processes 30S rRNA precursor transcript even in absence of ribonuclease 3 (Rnc); Rnc processes 30S rRNA into smaller rRNA precursors. This is Mini-ribonuclease 3 from Acholeplasma laidlawii (strain PG-8A).